The sequence spans 506 residues: Beta-glucosidase 13 (506 aa).

Residues 1 to 25 form the signal peptide; that stretch reads MAAAGEVVMLGGILLPLLLVVAVSG. Gln-49 serves as a coordination point for a beta-D-glucoside. Asn-118 carries N-linked (GlcNAc...) asparagine glycosylation. A beta-D-glucoside is bound by residues His-153 and 198–199; that span reads NE. Catalysis depends on Glu-199, which acts as the Proton donor. A disulfide bridge connects residues Cys-219 and Cys-226. N-linked (GlcNAc...) asparagine glycosylation is present at Asn-225. Tyr-342 lines the a beta-D-glucoside pocket. Residues Asn-357 and Asn-367 are each glycosylated (N-linked (GlcNAc...) asparagine). Glu-413 provides a ligand contact to a beta-D-glucoside. Glu-413 serves as the catalytic Nucleophile. An N-linked (GlcNAc...) asparagine glycan is attached at Asn-421. A beta-D-glucoside is bound by residues Trp-462, 469 to 470, and Phe-478; that span reads EW.

The protein belongs to the glycosyl hydrolase 1 family.

It carries out the reaction Hydrolysis of terminal, non-reducing beta-D-glucosyl residues with release of beta-D-glucose.. The sequence is that of Beta-glucosidase 13 (BGLU13) from Oryza sativa subsp. japonica (Rice).